The sequence spans 583 residues: Multidrug transporter QDR2 (583 aa).

The segment at 23–46 is disordered; sequence EKYDGPDLSEVDSEDNDKMIKTNE. The N-linked (GlcNAc...) asparagine glycan is linked to N60. The chain crosses the membrane as a helical span at residues 88–108; the sequence is AYTGLFSTMAGAIYYPVLSVI. N120 is a glycosylation site (N-linked (GlcNAc...) asparagine). A run of 5 helical transmembrane segments spans residues 121–141, 148–168, 178–198, 208–228, and 238–258; these read ITVV…GGLA, PVVL…ACAQ, CLQA…IGDV, VGYI…IGAG, and IFWF…IMLP. N267 carries an N-linked (GlcNAc...) asparagine glycan. Helical transmembrane passes span 323 to 342 and 354 to 374; these read ILLV…QTAL and VAKI…SIVT. N-linked (GlcNAc...) asparagine glycosylation occurs at N380. 4 helical membrane-spanning segments follow: residues 432–452, 458–478, 493–513, and 524–544; these read HAAF…GWCI, LASV…ILTF, TATG…IGCL, and GVFT…FYLL.

This sequence belongs to the major facilitator superfamily. CAR1 family.

The protein resides in the cell membrane. Its function is as follows. Multidrug resistance transporter involved in resistance to the antifungal drugs miconazole, tioconazole, clotrimazole, and ketoconazole; as well as to quinidine. Decreases the intracellular accumulation of clotrimazole in and plays a role in the extrusion of this antifungal from preloaded cells. The sequence is that of Multidrug transporter QDR2 from Candida glabrata (strain ATCC 2001 / BCRC 20586 / JCM 3761 / NBRC 0622 / NRRL Y-65 / CBS 138) (Yeast).